Consider the following 290-residue polypeptide: Bifunctional protein FolD (290 aa).

NADP(+)-binding positions include 164-166 (GRS), Ser-193, and Ile-234.

This sequence belongs to the tetrahydrofolate dehydrogenase/cyclohydrolase family. Homodimer.

It catalyses the reaction (6R)-5,10-methylene-5,6,7,8-tetrahydrofolate + NADP(+) = (6R)-5,10-methenyltetrahydrofolate + NADPH. The enzyme catalyses (6R)-5,10-methenyltetrahydrofolate + H2O = (6R)-10-formyltetrahydrofolate + H(+). It participates in one-carbon metabolism; tetrahydrofolate interconversion. Catalyzes the oxidation of 5,10-methylenetetrahydrofolate to 5,10-methenyltetrahydrofolate and then the hydrolysis of 5,10-methenyltetrahydrofolate to 10-formyltetrahydrofolate. This is Bifunctional protein FolD from Cytophaga hutchinsonii (strain ATCC 33406 / DSM 1761 / CIP 103989 / NBRC 15051 / NCIMB 9469 / D465).